The primary structure comprises 81 residues: Photosystem I iron-sulfur center (81 aa).

2 consecutive 4Fe-4S ferredoxin-type domains span residues 2 to 31 and 39 to 68; these read SHTV…MIPW and IASS…VRVY. The [4Fe-4S] cluster site is built by C11, C14, C17, C21, C48, C51, C54, and C58.

As to quaternary structure, the eukaryotic PSI reaction center is composed of at least 11 subunits. It depends on [4Fe-4S] cluster as a cofactor.

It localises to the plastid. Its subcellular location is the chloroplast thylakoid membrane. It catalyses the reaction reduced [plastocyanin] + hnu + oxidized [2Fe-2S]-[ferredoxin] = oxidized [plastocyanin] + reduced [2Fe-2S]-[ferredoxin]. Apoprotein for the two 4Fe-4S centers FA and FB of photosystem I (PSI); essential for photochemical activity. FB is the terminal electron acceptor of PSI, donating electrons to ferredoxin. The C-terminus interacts with PsaA/B/D and helps assemble the protein into the PSI complex. Required for binding of PsaD and PsaE to PSI. PSI is a plastocyanin-ferredoxin oxidoreductase, converting photonic excitation into a charge separation, which transfers an electron from the donor P700 chlorophyll pair to the spectroscopically characterized acceptors A0, A1, FX, FA and FB in turn. This chain is Photosystem I iron-sulfur center, found in Chaetosphaeridium globosum (Charophycean green alga).